Consider the following 818-residue polypeptide: Hillarin (818 aa).

The region spanning 9–76 (STCLRCSETV…SSHVPKSGPG (68 aa)) is the LIM zinc-binding domain. Residues 97–141 (FVNEQIRGTRSEVDGGPLGGSRQSTPNGYGSREISSPSQNDSDYK) are disordered. Residues 117–137 (SRQSTPNGYGSREISSPSQND) show a composition bias toward polar residues. The stretch at 216 to 272 (QDEWERELQRLTHKFEKELATSRRSRDEANILTMRHEQQKEDLEKNMTLRRSKKKES) forms a coiled coil.

Belongs to the transglutaminase-like superfamily. Interacts with pnut. As to expression, localizes to the neuropil of the embryonic central nervous system (at protein level). Also detected in third instar larval brain (at protein level).

The protein localises to the cytoplasm. It is found in the cell cortex. Its subcellular location is the cleavage furrow. Its function is as follows. May act as a modulator of septin function during cytokinesis in the developing nervous system. The protein is Hillarin of Drosophila melanogaster (Fruit fly).